The following is a 111-amino-acid chain: MKFCPKCGSMMMPRKENGKTVYKCSKCGYIDTENQKEAKITTVIKHSAKEKTLVLESDMPKTGVQLTRGISCPSCGNDEAYFWILQTRSADEPATRFYKCTKCGKVWREYE.

8 residues coordinate Zn(2+): C4, C7, C24, C27, C72, C75, C100, and C103. Residues 4 to 27 (CPKCGSMMMPRKENGKTVYKCSKC) form a C4-type zinc finger. A TFIIS-type zinc finger spans residues 68-108 (RGISCPSCGNDEAYFWILQTRSADEPATRFYKCTKCGKVWR).

The protein belongs to the archaeal RpoM/eukaryotic RPA12/RPB9/RPC11 RNA polymerase family.

Functionally, induces RNA cleavage activity in the RNA polymerase. In its presence, the cleavage activity of the RNA polymerase truncates the RNA back to position +15 in a stepwise manner by releasing mainly dinucleotides from the 3'-end of the nascent RNA. The truncated RNAs are able to continue elongation. Involved in transcriptional proofreading and fidelity. Misincorporation of nucleotides during elongation of transcription leads to arrested elongation complexes which are rescued by TFS-promoted removal of a dinucleotide from the 3'-end. TFS is able to induce a cleavage resynthesis cycle in stalled elongation complexes (resulting from the next missing nucleotide or a reduced incorporation rate of a wrong nucleotide) preventing misincorporation and enabling proofreading in a post-incorporation manner. Pausing of elongation complexes is the main determinant of TFS-induced RNA cleavage. The chain is Transcription factor S from Sulfolobus acidocaldarius (strain ATCC 33909 / DSM 639 / JCM 8929 / NBRC 15157 / NCIMB 11770).